Consider the following 505-residue polypeptide: Maturase K (505 aa).

This sequence belongs to the intron maturase 2 family. MatK subfamily.

It localises to the plastid. Its subcellular location is the chloroplast. Its function is as follows. Usually encoded in the trnK tRNA gene intron. Probably assists in splicing its own and other chloroplast group II introns. In Kunzea capitata (Pink kunzea), this protein is Maturase K.